The sequence spans 336 residues: MTAIDFHKLAKIELHCHLDGSLSLSTIRHLAELAQIDLPEDDEELKQHVTAPVTCESLLEYLESFDYIRPLLQTNEALTIAAYDVAKQAALENVIYIEVRFAPELSMDKGLTVTETIDAVCQGLRQAQEEFGIIAKALVCGMRQSDQSLTARILDEANQVRDSDFVGFDFAGDELNYGPAAIKPLIEQVKSYNRPMTFHAGECGCPAFLAESIAMGIKRNGHATILAQEPELLDEFVKNGVTGELCLTSNLQTKAAVTVNDFPYLKMKAAGANITINTDNRTVSDTNLTKEYELYHKYFDSTVQDFYAHNKTAIEASFASDEEKEELLARLAKAYS.

2 residues coordinate Zn(2+): His-15 and His-17. Positions 17, 19, and 172 each coordinate substrate. Zn(2+) is bound at residue His-199. Residue Glu-202 is the Proton donor of the active site. A Zn(2+)-binding site is contributed by Asp-279.

Belongs to the metallo-dependent hydrolases superfamily. Adenosine and AMP deaminases family. Adenosine deaminase subfamily. Requires Zn(2+) as cofactor.

The catalysed reaction is adenosine + H2O + H(+) = inosine + NH4(+). The enzyme catalyses 2'-deoxyadenosine + H2O + H(+) = 2'-deoxyinosine + NH4(+). Its function is as follows. Catalyzes the hydrolytic deamination of adenosine and 2-deoxyadenosine. The chain is Adenosine deaminase from Streptococcus thermophilus (strain ATCC BAA-250 / LMG 18311).